A 487-amino-acid polypeptide reads, in one-letter code: Cytochrome P450 716A75 (487 aa).

The helical transmembrane segment at 5–25 (FVSLLSLFLLILLPLSLLFLF) threads the bilayer. Cys434 contributes to the heme binding site.

Belongs to the cytochrome P450 family. Requires heme as cofactor.

The protein resides in the membrane. It catalyses the reaction beta-amyrin + reduced [NADPH--hemoprotein reductase] + O2 = erythrodiol + oxidized [NADPH--hemoprotein reductase] + H2O + H(+). It carries out the reaction erythrodiol + reduced [NADPH--hemoprotein reductase] + O2 = oleanolic aldehyde + oxidized [NADPH--hemoprotein reductase] + 2 H2O + H(+). The enzyme catalyses oleanolic aldehyde + reduced [NADPH--hemoprotein reductase] + O2 = oleanolate + oxidized [NADPH--hemoprotein reductase] + H2O + 2 H(+). Functionally, catalyzes the C-28 oxidation of beta-amyrin to form erythrodiol. Catalyzes the C-28 oxidation of erythrodiol to form oleanolic aldehyde. Catalyzes the C-28 oxidation of oleanolic aldehyde to form oleanolate. The protein is Cytochrome P450 716A75 of Maesa lanceolata (False assegai).